The following is a 338-amino-acid chain: Lipoate-protein ligase A (338 aa).

One can recognise a BPL/LPL catalytic domain in the interval 29-216 (PATQRVLFLW…AFFSHYGERV (188 aa)). ATP is bound by residues Arg71, 76–79 (GAVF), and Lys134. Lys134 is a binding site for (R)-lipoate.

Belongs to the LplA family. Monomer.

Its subcellular location is the cytoplasm. The enzyme catalyses L-lysyl-[lipoyl-carrier protein] + (R)-lipoate + ATP = N(6)-[(R)-lipoyl]-L-lysyl-[lipoyl-carrier protein] + AMP + diphosphate + H(+). Its pathway is protein modification; protein lipoylation via exogenous pathway; protein N(6)-(lipoyl)lysine from lipoate: step 1/2. It functions in the pathway protein modification; protein lipoylation via exogenous pathway; protein N(6)-(lipoyl)lysine from lipoate: step 2/2. Its function is as follows. Catalyzes both the ATP-dependent activation of exogenously supplied lipoate to lipoyl-AMP and the transfer of the activated lipoyl onto the lipoyl domains of lipoate-dependent enzymes. The polypeptide is Lipoate-protein ligase A (Klebsiella pneumoniae subsp. pneumoniae (strain ATCC 700721 / MGH 78578)).